The following is a 211-amino-acid chain: Mediator-associated protein 2 (211 aa).

Residues 128-211 form a disordered region; it reads QQKLVGSVTN…KSKKKVKKEE (84 aa). The span at 134-148 shows a compositional bias: low complexity; it reads SVTNSSKKSSNLTQS. Position 173 is a phosphoserine (S173). Low complexity predominate over residues 189-198; the sequence is STSTVSGSSE. A compositionally biased stretch (basic residues) spans 202-211; the sequence is KSKKKVKKEE.

In terms of assembly, associated with the Mediator complex.

Its subcellular location is the nucleus. This Arabidopsis thaliana (Mouse-ear cress) protein is Mediator-associated protein 2.